A 201-amino-acid polypeptide reads, in one-letter code: Ras-related protein Rab-9A (201 aa).

A2 carries the post-translational modification N-acetylalanine. G17, V18, G19, K20, S21, S22, D33, S34, H38, and T39 together coordinate GTP. S21 contacts Mg(2+). Residues 31-42 (KFDSQLFHTIGV) carry the Switch 1 motif. At S34 the chain carries Phosphoserine. Mg(2+)-binding residues include T39 and D62. Residues 64–78 (AGQERFRSLRTPFYR) carry the Switch 2 motif. GTP contacts are provided by G65, N124, K125, D127, A155, and K156. Position 179 is a phosphoserine (S179). T187 bears the Phosphothreonine mark. S-geranylgeranyl cysteine attachment occurs at residues C200 and C201.

It belongs to the small GTPase superfamily. Rab family. As to quaternary structure, interacts (preferentially in its GTP-bound form) with GCC2 (via its GRIP domain). Interacts (GTP-bound form) with SGSM1; the GDP-bound form has much lower affinity for SGSM1. Interacts with SGSM2. The GTP-bound form but not the GDP-bound form interacts with HPS4. The GTP-bound form but not the GDP-bound form interacts with BLOC-3 complex (heterodimer of HPS1 and HPS4) but does not interact with HPS1 alone. Interacts (GTP-bound form) with NDE1; two RAB9A-GTP molecules lie on the opposite sides of the NDE1 homodimer; the interaction leads to RAB9A-dynein motor tethering. Interacts (GTP-bound form) with NDEL1. It depends on Mg(2+) as a cofactor.

Its subcellular location is the cell membrane. It is found in the endoplasmic reticulum membrane. It localises to the golgi apparatus membrane. The protein localises to the late endosome. The protein resides in the cytoplasmic vesicle. Its subcellular location is the phagosome membrane. It is found in the phagosome. It localises to the cytoplasmic vesicle membrane. The protein localises to the melanosome. It carries out the reaction GTP + H2O = GDP + phosphate + H(+). Regulated by guanine nucleotide exchange factors (GEFs) which promote the exchange of bound GDP for free GTP. Regulated by GTPase activating proteins (GAPs) which increase the GTP hydrolysis activity. Inhibited by GDP dissociation inhibitors (GDIs). Its function is as follows. The small GTPases Rab are key regulators of intracellular membrane trafficking, from the formation of transport vesicles to their fusion with membranes. Rabs cycle between an inactive GDP-bound form and an active GTP-bound form that is able to recruit to membranes different sets of downstream effectors directly responsible for vesicle formation, movement, tethering and fusion. RAB9A is involved in the transport of proteins between the endosomes and the trans-Golgi network (TGN). Specifically uses NDE1/NDEL1 as an effector to interact with the dynein motor complex in order to control retrograde trafficking of RAB9-associated late endosomes to the TGN. Involved in the recruitment of SGSM2 to melanosomes and is required for the proper trafficking of melanogenic enzymes TYR, TYRP1 and DCT/TYRP2 to melanosomes in melanocytes. The polypeptide is Ras-related protein Rab-9A (Mus musculus (Mouse)).